The primary structure comprises 382 residues: Sulfate adenylyltransferase (382 aa).

The protein belongs to the sulfate adenylyltransferase family.

The enzyme catalyses sulfate + ATP + H(+) = adenosine 5'-phosphosulfate + diphosphate. It functions in the pathway sulfur metabolism; hydrogen sulfide biosynthesis; sulfite from sulfate: step 1/3. This chain is Sulfate adenylyltransferase, found in Ignicoccus hospitalis (strain KIN4/I / DSM 18386 / JCM 14125).